Reading from the N-terminus, the 541-residue chain is Ankyrin repeat domain-containing protein 13C (541 aa).

Over residues 1–20 the composition is skewed to basic and acidic residues; sequence MTGEKIRSLRRDHKPSKEEG. The tract at residues 1-27 is disordered; the sequence is MTGEKIRSLRRDHKPSKEEGDLLEPGD. ANK repeat units lie at residues 111-142, 143-172, and 176-205; these read PAHY…QKDN, HGNT…PVKV, and QGWS…QQSR. Phosphoserine is present on S411.

It is found in the endoplasmic reticulum membrane. Acts as a molecular chaperone for G protein-coupled receptors, regulating their biogenesis and exit from the ER. In Homo sapiens (Human), this protein is Ankyrin repeat domain-containing protein 13C (ANKRD13C).